Here is a 688-residue protein sequence, read N- to C-terminus: Phosphatidylinositol 4-phosphate 5-kinase type-1 gamma (688 aa).

Residues 48–71 (GQPGPGHGKKLGHRGVDASGETTY) form a disordered region. In terms of domain architecture, PIPK spans 75 to 443 (TSSTLKGAIQ…RFFKFMSSTV (369 aa)). N6-acetyllysine is present on residues Lys-265 and Lys-268. Arg-459 carries the asymmetric dimethylarginine; alternate modification. Arg-459 carries the omega-N-methylarginine; alternate modification. Positions 525–534 (TTLSSTSLSI) are enriched in low complexity. 2 disordered regions span residues 525 to 565 (TTLS…QEEL) and 592 to 629 (GAGVEVPPSGASAAATVEVDAASQASEPASQASDEEDA). Position 554 is a phosphoserine (Ser-554). Positions 602 to 623 (ASAAATVEVDAASQASEPASQA) are enriched in low complexity. At Tyr-635 the chain carries Phosphotyrosine; by EGFR. Position 671 is a phosphotyrosine; by CSK (Tyr-671). Ser-672 is modified (phosphoserine; by CDK5, MAPK1 and CDK1). 2 positions are modified to phosphoserine: Ser-682 and Ser-686. The residue at position 688 (Thr-688) is a Phosphothreonine.

In terms of assembly, interacts with TLN1. Interacts with TLN2; interaction stimulates 1-phosphatidylinositol-4-phosphate 5-kinase activity. May compete with beta-integrins for the same binding site on TLN1 and TLN2. Interacts with ARF6; interaction stimulates 1-phosphatidylinositol-4-phosphate 5-kinase activity. Interacts with AP2B1. Interacts with AP2M1; phosphorylation of PIP5K1C by CSK disrupts the interaction; clathrin competes with PIP5K1C. Interacts with CDH1. Interacts with CSK. Interacts with PLCG1; interaction is abolished upon EGF stimulation. Interacts with LAPTM4B; promotes SNX5 association with LAPTM4B; kinase activity of PIP5K1C is required; interaction is regulated by phosphatidylinositol 4,5-bisphosphate generated by PIP5K1C. In terms of processing, phosphorylation on Ser-672 negatively regulates binding to TLN2 and is strongly stimulated in mitosis. Phosphorylation on Tyr-671 is necessary for targeting to focal adhesions. Phosphorylation on Ser-672 and Tyr-671 are mutually exclusive. Phosphorylated by SYK and CSK. Tyrosine phosphorylation is enhanced by PTK2 signaling. Phosphorylated at Tyr-635 upon EGF stimulation. Some studies suggest that phosphorylation on Tyr-671 enhances binding to tailins (TLN1 and TLN2); others that phosphorylation at Tyr-671 does not directly enhance binding to tailins (TLN1 and TLN2) but may act indirectly by inhibiting phosphorylation at Ser-672. Post-translationally, acetylation at Lys-265 and Lys-268 seems to decrease lipid kinase activity. Deacetylation of these sites by SIRT1 positively regulates the exocytosis of TSH-containing granules from pituitary cells.

It is found in the cell membrane. It localises to the endomembrane system. Its subcellular location is the cytoplasm. The protein resides in the cell junction. The protein localises to the focal adhesion. It is found in the adherens junction. It localises to the cell projection. Its subcellular location is the ruffle membrane. The protein resides in the phagocytic cup. The protein localises to the uropodium. The catalysed reaction is a 1,2-diacyl-sn-glycero-3-phospho-(1D-myo-inositol 4-phosphate) + ATP = a 1,2-diacyl-sn-glycero-3-phospho-(1D-myo-inositol-4,5-bisphosphate) + ADP + H(+). It catalyses the reaction 1-octadecanoyl-2-(5Z,8Z,11Z,14Z)-eicosatetraenoyl-sn-glycero-3-phospho-1D-myo-inositol 4-phosphate + ATP = 1-octadecanoyl-2-(5Z,8Z,11Z,14Z)-eicosatetraenoyl-sn-glycero-3-phospho-1D-myo-inositol 4,5-bisphosphate + ADP + H(+). The enzyme catalyses 1-octadecanoyl-2-(9Z)-octadecenoyl-sn-glycero-3-phospho-1D-myo-inositol 4-phosphate + ATP = 1-octadecanoyl-2-(9Z)-octadecenoyl-sn-glycero-3-phospho-1D-myo-inositol 4,5-bisphosphate + ADP + H(+). It carries out the reaction 1-octadecanoyl-2-(9Z)-octadecenoyl-sn-glycero-3-phospho-1D-myo-inositol + ATP = 1-octadecanoyl-2-(9Z)-octadecenoyl-sn-glycero-3-phospho-1D-myo-inositol 5-phosphate + ADP + H(+). The catalysed reaction is 1-octadecanoyl-2-(9Z,12Z)-octadecadienoyl-sn-glycero-3-phospho-1D-myo-inositol + ATP = 1-octadecanoyl-2-(9Z,12Z)-octadecadienoyl-sn-glycero-3-phospho-1D-myo-inositol 5-phosphate + ADP + H(+). It catalyses the reaction 1-octadecanoyl-2-(5Z,8Z,11Z,14Z-eicosatetraenoyl)-sn-glycero-3-phospho-(1D-myo-inositol) + ATP = 1-octadecanoyl-2-(5Z,8Z,11Z,14Z)-eicosatetraenoyl-sn-glycero-3-phospho-1D-myo-inositol 5-phosphate + ADP + H(+). The enzyme catalyses 1,2-di-(9Z,12Z)-octadecadienoyl-sn-glycero-3-phospho-1D-myo-inositol + ATP = 1,2-di(9Z,12Z)-octadecadienoyl-sn-glycero-3-phospho-1D-myo-inositol 5-phosphate + ADP + H(+). Its function is as follows. Catalyzes the phosphorylation of phosphatidylinositol 4-phosphate (PtdIns(4)P/PI4P) to form phosphatidylinositol 4,5-bisphosphate (PtdIns(4,5)P2/PIP2), a lipid second messenger that regulates several cellular processes such as signal transduction, vesicle trafficking, actin cytoskeleton dynamics, cell adhesion, and cell motility. PtdIns(4,5)P2 can directly act as a second messenger or can be utilized as a precursor to generate other second messengers: inositol 1,4,5-trisphosphate (IP3), diacylglycerol (DAG) or phosphatidylinositol-3,4,5-trisphosphate (PtdIns(3,4,5)P3/PIP3). PIP5K1A-mediated phosphorylation of PtdIns(4)P is the predominant pathway for PtdIns(4,5)P2 synthesis. Together with PIP5K1A, is required for phagocytosis, both enzymes regulating different types of actin remodeling at sequential steps. Promotes particle attachment by generating the pool of PtdIns(4,5)P2 that induces controlled actin depolymerization to facilitate Fc-gamma-R clustering. Mediates RAC1-dependent reorganization of actin filaments. Required for synaptic vesicle transport. Controls the plasma membrane pool of PtdIns(4,5)P2 implicated in synaptic vesicle endocytosis and exocytosis. Plays a role in endocytosis mediated by clathrin and AP-2 (adaptor protein complex 2). Required for clathrin-coated pits assembly at the synapse. Participates in cell junction assembly. Modulates adherens junctions formation by facilitating CDH1/cadherin trafficking. Required for focal adhesion dynamics. Modulates the targeting of talins (TLN1 and TLN2) to the plasma membrane and their efficient assembly into focal adhesions. Regulates the interaction between talins (TLN1 and TLN2) and beta-integrins. Required for uropodium formation and retraction of the cell rear during directed migration. Has a role in growth factor-stimulated directional cell migration and adhesion. Required for talin assembly into nascent adhesions forming at the leading edge toward the direction of the growth factor. Negative regulator of T-cell activation and adhesion. Negatively regulates integrin alpha-L/beta-2 (LFA-1) polarization and adhesion induced by T-cell receptor. Together with PIP5K1A has a role during embryogenesis and together with PIP5K1B may have a role immediately after birth. The protein is Phosphatidylinositol 4-phosphate 5-kinase type-1 gamma of Rattus norvegicus (Rat).